Consider the following 311-residue polypeptide: Aspartate carbamoyltransferase catalytic subunit (311 aa).

Carbamoyl phosphate contacts are provided by Arg55 and Thr56. Lys85 is an L-aspartate binding site. Carbamoyl phosphate-binding residues include Arg106, His135, and Gln138. L-aspartate-binding residues include Arg168 and Arg230. Positions 268 and 269 each coordinate carbamoyl phosphate.

This sequence belongs to the aspartate/ornithine carbamoyltransferase superfamily. ATCase family. In terms of assembly, heterododecamer (2C3:3R2) of six catalytic PyrB chains organized as two trimers (C3), and six regulatory PyrI chains organized as three dimers (R2).

It catalyses the reaction carbamoyl phosphate + L-aspartate = N-carbamoyl-L-aspartate + phosphate + H(+). Its pathway is pyrimidine metabolism; UMP biosynthesis via de novo pathway; (S)-dihydroorotate from bicarbonate: step 2/3. Catalyzes the condensation of carbamoyl phosphate and aspartate to form carbamoyl aspartate and inorganic phosphate, the committed step in the de novo pyrimidine nucleotide biosynthesis pathway. This Yersinia pseudotuberculosis serotype IB (strain PB1/+) protein is Aspartate carbamoyltransferase catalytic subunit.